Here is a 557-residue protein sequence, read N- to C-terminus: Formate--tetrahydrofolate ligase (557 aa).

Residue 65 to 72 coordinates ATP; sequence TPAGEGKT.

It belongs to the formate--tetrahydrofolate ligase family.

The catalysed reaction is (6S)-5,6,7,8-tetrahydrofolate + formate + ATP = (6R)-10-formyltetrahydrofolate + ADP + phosphate. It functions in the pathway one-carbon metabolism; tetrahydrofolate interconversion. The chain is Formate--tetrahydrofolate ligase from Methylorubrum extorquens (strain PA1) (Methylobacterium extorquens).